We begin with the raw amino-acid sequence, 76 residues long: DNA-directed RNA polymerase subunit Rpo10 (76 aa).

Cys-16, Cys-19, Cys-53, and Cys-54 together coordinate Zn(2+).

Belongs to the archaeal Rpo10/eukaryotic RPB10 RNA polymerase subunit family. As to quaternary structure, part of the RNA polymerase complex. The cofactor is Zn(2+).

It localises to the cytoplasm. It catalyses the reaction RNA(n) + a ribonucleoside 5'-triphosphate = RNA(n+1) + diphosphate. Its function is as follows. DNA-dependent RNA polymerase (RNAP) catalyzes the transcription of DNA into RNA using the four ribonucleoside triphosphates as substrates. In Archaeoglobus fulgidus (strain ATCC 49558 / DSM 4304 / JCM 9628 / NBRC 100126 / VC-16), this protein is DNA-directed RNA polymerase subunit Rpo10.